We begin with the raw amino-acid sequence, 840 residues long: Phosphatidylglycerol lysyltransferase (840 aa).

Over 1–8 (MTQELKSK) the chain is Cytoplasmic. Residues 9–29 (LLSFFKFIFATALFIFVIFTL) traverse the membrane as a helical segment. At 30–52 (YRELSHINFKETFIQFGKINRLW) the chain is on the extracellular side. Residues 53–73 (LVLLFAGGGLSLILLSLYDII) traverse the membrane as a helical segment. The Cytoplasmic portion of the chain corresponds to 74-89 (LVKALKLKMPLIRVFR). A helical membrane pass occupies residues 90–110 (VSYIINALNSIIGFGGFIGAG). The Extracellular segment spans residues 111–129 (VRAFVYKNYTNDTKKLVQY). The chain crosses the membrane as a helical span at residues 130 to 150 (ISIILVSMLTGLSLLSILVVL). At 151-161 (RIFNASHMIDE) the chain is on the cytoplasmic side. A helical transmembrane segment spans residues 162–182 (ISWVRWILYIVALFLPIFIFY). Topologically, residues 183-200 (TVARPVDRNNRYMGVYCT) are extracellular. A helical transmembrane segment spans residues 201–221 (VVSCVEWMAAATVLYFAALIV). At 222-229 (DIHISFMT) the chain is on the cytoplasmic side. The helical transmembrane segment at 230–250 (FVGIFVIAALSGLVSFIPGGF) threads the bilayer. Over 251 to 270 (GAFDLVVLLGLKSLGISEEK) the chain is Extracellular. A helical membrane pass occupies residues 271–291 (ILLALVLYRFAYYFVPVMIAL). At 292-337 (ILSSFEFGNTAKKYLDNSKYFIPVKDFTSFLRSYQKDILAKVPSFS) the chain is on the cytoplasmic side. A helical membrane pass occupies residues 338-358 (LAILIFLTSIIFFINNLTIVY). Over 359 to 366 (DGLYDGNH) the chain is Extracellular. The chain crosses the membrane as a helical span at residues 367 to 387 (FAYYIALAVQTSACLLLILNV). The Cytoplasmic segment spans residues 388-392 (RGIYK). Residues 393-413 (GSRRAIIYAFISIILIASATI) form a helical membrane-spanning segment. Over 414-415 (YT) the chain is Extracellular. Residues 416–436 (YASFLLLSWLIIIFVLLILAY) form a helical membrane-spanning segment. Residues 437 to 450 (QRAQVLKRPLRFKK) lie on the Cytoplasmic side of the membrane. A helical transmembrane segment spans residues 451–471 (LAVMLLLSIFILYLNHILISG). Residues 472-489 (TLYALDVYHIEIDTSLLR) are Extracellular-facing. A helical transmembrane segment spans residues 490–510 (YYFWMTIVIIMLLVGVIAWLF). Over 511 to 840 (DYKYKCPHHS…LKVMRVIRHK (330 aa)) the chain is Cytoplasmic.

This sequence belongs to the LPG synthase family.

It localises to the cell membrane. It carries out the reaction L-lysyl-tRNA(Lys) + a 1,2-diacyl-sn-glycero-3-phospho-(1'-sn-glycerol) = a 1,2-diacyl-sn-glycero-3-phospho-1'-(3'-O-L-lysyl)-sn-glycerol + tRNA(Lys). Catalyzes the transfer of a lysyl group from L-lysyl-tRNA(Lys) to membrane-bound phosphatidylglycerol (PG), which produces lysylphosphatidylglycerol (LPG), a major component of the bacterial membrane with a positive net charge. LPG synthesis contributes to bacterial virulence as it is involved in the resistance mechanism against cationic antimicrobial peptides (CAMP) produces by the host's immune system (defensins, cathelicidins) and by the competing microorganisms (bacteriocins). In fact, the modification of anionic phosphatidylglycerol with positively charged L-lysine results in repulsion of the peptides. The chain is Phosphatidylglycerol lysyltransferase (mprF) from Staphylococcus epidermidis (strain ATCC 12228 / FDA PCI 1200).